The following is a 135-amino-acid chain: NAD(P)H-quinone oxidoreductase subunit 3 (135 aa).

A run of 3 helical transmembrane segments spans residues 15–35 (LMFV…AAAV), 79–99 (MFAL…PWAV), and 104–124 (LGLL…VALA).

The protein belongs to the complex I subunit 3 family. In terms of assembly, NDH-1 can be composed of about 15 different subunits; different subcomplexes with different compositions have been identified which probably have different functions.

The protein resides in the cellular thylakoid membrane. The catalysed reaction is a plastoquinone + NADH + (n+1) H(+)(in) = a plastoquinol + NAD(+) + n H(+)(out). It catalyses the reaction a plastoquinone + NADPH + (n+1) H(+)(in) = a plastoquinol + NADP(+) + n H(+)(out). NDH-1 shuttles electrons from an unknown electron donor, via FMN and iron-sulfur (Fe-S) centers, to quinones in the respiratory and/or the photosynthetic chain. The immediate electron acceptor for the enzyme in this species is believed to be plastoquinone. Couples the redox reaction to proton translocation, and thus conserves the redox energy in a proton gradient. Cyanobacterial NDH-1 also plays a role in inorganic carbon-concentration. This Synechococcus sp. (strain CC9311) protein is NAD(P)H-quinone oxidoreductase subunit 3.